Reading from the N-terminus, the 161-residue chain is Troponin C, slow skeletal and cardiac muscles (161 aa).

Methionine 1 is subject to N-acetylmethionine. EF-hand domains follow at residues 16 to 51 (QKNE…LGQN), 52 to 87 (PTPE…CMKD), 92 to 127 (KTEE…TGET), and 128 to 161 (ITED…KGVE). Positions 65, 67, 69, 71, 76, 105, 107, 109, 111, 116, 141, 143, 145, 147, and 152 each coordinate Ca(2+).

It belongs to the troponin C family.

Functionally, troponin is the central regulatory protein of striated muscle contraction. Tn consists of three components: Tn-I which is the inhibitor of actomyosin ATPase, Tn-T which contains the binding site for tropomyosin and Tn-C. The binding of calcium to Tn-C abolishes the inhibitory action of Tn on actin filaments. The chain is Troponin C, slow skeletal and cardiac muscles (TNNC1) from Gallus gallus (Chicken).